Consider the following 64-residue polypeptide: DNA-binding protein 7a (64 aa).

It belongs to the 7 kDa DNA-binding/endoribonuclease P2 family. In terms of assembly, monomer.

The protein resides in the cytoplasm. Functionally, can constrain negative DNA supercoils. May be involved in maintaining the integrity of the genome at high temperature. The protein is DNA-binding protein 7a of Saccharolobus islandicus (strain L.D.8.5 / Lassen #2) (Sulfolobus islandicus).